The chain runs to 322 residues: MIKCGIIGGAGYTAGELIRLLLNHPDAELTFINSSSNAGNKITDVHGGLYGETDLVFTSELPLDSIDLLFFCTAHGDTKKFMENHTVPENVKIIDLSMDYRIEGPEHDFVYGLPELNRRRICNARHIANPGCFATCIQLGVLPLAKHLMLNSDLHVNAITGSTGAGVKPSSTSHFSWRNDNISIYKPFTHQHLAEINQSLSQLQKSYSSRINFIPVRGNFSRGIFATTYIDCKIDLVEIRRIYEEYYDDHSFTFITDKNPDLKQVVNTNKCLIHLQKIDDKLLIISMIDNLLKGASGQAVHNMNLLFGLEETVGLHLKPSAF.

C132 is a catalytic residue.

It belongs to the NAGSA dehydrogenase family. Type 1 subfamily.

The protein localises to the cytoplasm. It carries out the reaction N-acetyl-L-glutamate 5-semialdehyde + phosphate + NADP(+) = N-acetyl-L-glutamyl 5-phosphate + NADPH + H(+). It functions in the pathway amino-acid biosynthesis; L-arginine biosynthesis; N(2)-acetyl-L-ornithine from L-glutamate: step 3/4. Catalyzes the NADPH-dependent reduction of N-acetyl-5-glutamyl phosphate to yield N-acetyl-L-glutamate 5-semialdehyde. The protein is N-acetyl-gamma-glutamyl-phosphate reductase of Parabacteroides distasonis (strain ATCC 8503 / DSM 20701 / CIP 104284 / JCM 5825 / NCTC 11152).